Consider the following 250-residue polypeptide: Ubiquinone/menaquinone biosynthesis C-methyltransferase UbiE (250 aa).

S-adenosyl-L-methionine is bound by residues T73, D94, 122–123 (NA), and S139.

This sequence belongs to the class I-like SAM-binding methyltransferase superfamily. MenG/UbiE family.

The catalysed reaction is a 2-demethylmenaquinol + S-adenosyl-L-methionine = a menaquinol + S-adenosyl-L-homocysteine + H(+). It carries out the reaction a 2-methoxy-6-(all-trans-polyprenyl)benzene-1,4-diol + S-adenosyl-L-methionine = a 5-methoxy-2-methyl-3-(all-trans-polyprenyl)benzene-1,4-diol + S-adenosyl-L-homocysteine + H(+). It participates in quinol/quinone metabolism; menaquinone biosynthesis; menaquinol from 1,4-dihydroxy-2-naphthoate: step 2/2. Its pathway is cofactor biosynthesis; ubiquinone biosynthesis. In terms of biological role, methyltransferase required for the conversion of demethylmenaquinol (DMKH2) to menaquinol (MKH2) and the conversion of 2-polyprenyl-6-methoxy-1,4-benzoquinol (DDMQH2) to 2-polyprenyl-3-methyl-6-methoxy-1,4-benzoquinol (DMQH2). In Francisella philomiragia subsp. philomiragia (strain ATCC 25017 / CCUG 19701 / FSC 153 / O#319-036), this protein is Ubiquinone/menaquinone biosynthesis C-methyltransferase UbiE.